The sequence spans 243 residues: 1-(5-phosphoribosyl)-5-[(5-phosphoribosylamino)methylideneamino] imidazole-4-carboxamide isomerase (243 aa).

The active-site Proton acceptor is D8. D130 functions as the Proton donor in the catalytic mechanism.

The protein belongs to the HisA/HisF family.

The protein resides in the cytoplasm. It catalyses the reaction 1-(5-phospho-beta-D-ribosyl)-5-[(5-phospho-beta-D-ribosylamino)methylideneamino]imidazole-4-carboxamide = 5-[(5-phospho-1-deoxy-D-ribulos-1-ylimino)methylamino]-1-(5-phospho-beta-D-ribosyl)imidazole-4-carboxamide. It functions in the pathway amino-acid biosynthesis; L-histidine biosynthesis; L-histidine from 5-phospho-alpha-D-ribose 1-diphosphate: step 4/9. This is 1-(5-phosphoribosyl)-5-[(5-phosphoribosylamino)methylideneamino] imidazole-4-carboxamide isomerase from Vesicomyosocius okutanii subsp. Calyptogena okutanii (strain HA).